A 601-amino-acid chain; its full sequence is Glutathione-regulated potassium-efflux system protein KefB (601 aa).

The next 13 helical transmembrane spans lie at 4–24 (ADLL…VPLA), 29–49 (IGAV…GLGF), 55–75 (EILH…GLEL), 87–107 (IFGV…GLLM), 111–131 (FLWQ…TAMA), 152–172 (VLLF…LLAG), 177–197 (HFDW…LIGG), 207–227 (FIAA…LVLS), 230–250 (LFMD…GVLL), 262–282 (AIDP…GMSL), 284–304 (LGVL…LVVI), 324–344 (MQFA…FSTA), and 356–376 (ALLL…MKGI). An RCK N-terminal domain is found at 400-519 (KPQVVVVGFG…AGVTQFSRET (120 aa)).

This sequence belongs to the monovalent cation:proton antiporter 2 (CPA2) transporter (TC 2.A.37) family. KefB subfamily. Interacts with the regulatory subunit KefG.

The protein localises to the cell inner membrane. In terms of biological role, pore-forming subunit of a potassium efflux system that confers protection against electrophiles. Catalyzes K(+)/H(+) antiport. This Salmonella typhi protein is Glutathione-regulated potassium-efflux system protein KefB.